The primary structure comprises 215 residues: Eukaryotic translation initiation factor 4E (215 aa).

Positions 1-27 (MAERDSEPRVNIIRPDDEPEVEEERVP) are disordered. Position 207 is a phosphoserine; by PKC (S207).

The protein belongs to the eukaryotic initiation factor 4E family. As to quaternary structure, eIF4F is a multi-subunit complex, the composition of which varies with external and internal environmental conditions. It is composed of at least eIF4A, eIF4E and eIF4G. eIF4E is also known to interact with other partners. Post-translationally, phosphorylation increases the ability of the protein to bind to mRNA caps and to form the eIF4F complex.

Its function is as follows. Recognizes and binds the 7-methylguanosine-containing mRNA cap during an early step in the initiation of protein synthesis and facilitates ribosome binding by inducing the unwinding of the mRNAs secondary structures. This chain is Eukaryotic translation initiation factor 4E, found in Aplysia californica (California sea hare).